The sequence spans 904 residues: Protein translocase subunit SecA (904 aa).

ATP-binding positions include Q87, 105–109 (GEGKT), and D512. A disordered region spans residues 851-904 (LAKQQQLSHESDNSALMSQEEANVAASLERKVGRNDPCPCGSGKKYKQCHGRLQ). A compositionally biased stretch (polar residues) spans 853 to 871 (KQQQLSHESDNSALMSQEE). Residues C888, C890, C899, and H900 each coordinate Zn(2+). The span at 894 to 904 (KKYKQCHGRLQ) shows a compositional bias: basic residues.

The protein belongs to the SecA family. In terms of assembly, monomer and homodimer. Part of the essential Sec protein translocation apparatus which comprises SecA, SecYEG and auxiliary proteins SecDF-YajC and YidC. Zn(2+) is required as a cofactor.

Its subcellular location is the cell inner membrane. It is found in the cytoplasm. The enzyme catalyses ATP + H2O + cellular proteinSide 1 = ADP + phosphate + cellular proteinSide 2.. Functionally, part of the Sec protein translocase complex. Interacts with the SecYEG preprotein conducting channel. Has a central role in coupling the hydrolysis of ATP to the transfer of proteins into and across the cell membrane, serving both as a receptor for the preprotein-SecB complex and as an ATP-driven molecular motor driving the stepwise translocation of polypeptide chains across the membrane. The protein is Protein translocase subunit SecA of Yersinia enterocolitica serotype O:8 / biotype 1B (strain NCTC 13174 / 8081).